Here is a 134-residue protein sequence, read N- to C-terminus: MGRSRRTGAHRAHSLARQMKAKRRRPDLDEIHRELRPQGSARPQPDPNAEFDPDLPGGGLHRCLACARYFIDSTNLKTHFRSKDHKKRLKQLSVEPYSQEEAERAAGMGSYVPPRRLAVPTEVSTEVPEMDTST.

A compositionally biased stretch (basic residues) spans 1-25 (MGRSRRTGAHRAHSLARQMKAKRRR). Disordered regions lie at residues 1–57 (MGRS…DLPG) and 82–134 (SKDH…DTST). Basic and acidic residues predominate over residues 26–36 (PDLDEIHRELR). Residues 61–85 (HRCLACARYFIDSTNLKTHFRSKDH) form a C2H2-type zinc finger.

It belongs to the ZNF593/BUD20 C2H2-type zinc-finger protein family. As to quaternary structure, associates with pre-60S ribosomal particles. Ubiquitous. Detected in spleen, prostate, testis, small intestine, colon and to a minor level in thymus and peripheral blood leukocytes.

The protein localises to the nucleus. Its subcellular location is the nucleolus. It is found in the cytoplasm. Its function is as follows. Involved in pre-60S ribosomal particles maturation by promoting the nuclear export of the 60S ribosome. Negatively modulates the DNA binding activity of Oct-2 and therefore its transcriptional regulatory activity. This chain is Zinc finger protein 593 (ZNF593), found in Homo sapiens (Human).